The primary structure comprises 423 residues: Histidine--tRNA ligase (423 aa).

This sequence belongs to the class-II aminoacyl-tRNA synthetase family. In terms of assembly, homodimer.

Its subcellular location is the cytoplasm. It carries out the reaction tRNA(His) + L-histidine + ATP = L-histidyl-tRNA(His) + AMP + diphosphate + H(+). The chain is Histidine--tRNA ligase from Rhodococcus erythropolis (strain PR4 / NBRC 100887).